The chain runs to 251 residues: UPF0309 protein SCO4393 (251 aa).

The SIS domain maps to 36 to 220 (LADTVQNGGR…AATLADRGIE (185 aa)).

Belongs to the UPF0309 family.

The chain is UPF0309 protein SCO4393 from Streptomyces coelicolor (strain ATCC BAA-471 / A3(2) / M145).